A 541-amino-acid polypeptide reads, in one-letter code: Berberine bridge enzyme-like 1 (541 aa).

Residues 1–20 (MKLSCLVFLIVSSLVSSSLA) form the signal peptide. Asn25, Asn38, Asn73, Asn136, Asn302, Asn339, and Asn357 each carry an N-linked (GlcNAc...) asparagine glycan. A disulfide bond links Cys35 and Cys98. The 180-residue stretch at 76–255 (TSPKPLLVIA…LSFKIKLVPV (180 aa)) folds into the FAD-binding PCMH-type domain. The segment at residues 113 to 180 (HDYDGVSYIS…GTHGFPAGVC (68 aa)) is a cross-link (6-(S-cysteinyl)-8alpha-(pros-histidyl)-FAD (His-Cys)).

Belongs to the oxygen-dependent FAD-linked oxidoreductase family. The cofactor is FAD. In terms of processing, the FAD cofactor is bound via a bicovalent 6-S-cysteinyl, 8alpha-N1-histidyl FAD linkage. In terms of tissue distribution, accumulates in cell walls of etiolated hypocotyls.

The protein resides in the secreted. It localises to the cell wall. This is Berberine bridge enzyme-like 1 from Arabidopsis thaliana (Mouse-ear cress).